A 97-amino-acid polypeptide reads, in one-letter code: Large ribosomal subunit protein bL21 (97 aa).

Belongs to the bacterial ribosomal protein bL21 family. In terms of assembly, part of the 50S ribosomal subunit. Contacts protein L20.

Its function is as follows. This protein binds to 23S rRNA in the presence of protein L20. In Persephonella marina (strain DSM 14350 / EX-H1), this protein is Large ribosomal subunit protein bL21.